The primary structure comprises 153 residues: Ribosomal RNA large subunit methyltransferase H (153 aa).

Residues Ile-75, Gly-103, and Leu-121–Phe-126 each bind S-adenosyl-L-methionine.

Belongs to the RNA methyltransferase RlmH family. In terms of assembly, homodimer.

The protein localises to the cytoplasm. It catalyses the reaction pseudouridine(1915) in 23S rRNA + S-adenosyl-L-methionine = N(3)-methylpseudouridine(1915) in 23S rRNA + S-adenosyl-L-homocysteine + H(+). Functionally, specifically methylates the pseudouridine at position 1915 (m3Psi1915) in 23S rRNA. This Helicobacter hepaticus (strain ATCC 51449 / 3B1) protein is Ribosomal RNA large subunit methyltransferase H.